A 608-amino-acid chain; its full sequence is MRHLKLTGFIFFLLPLTESLALPTKPQDVDHFNATQKFIDENTTYLAIIAFSQYVQEASFDEVETLVKVMLDYRDRCWADNTLPECSKTANDAIQDMLCDMEGLPQKHNFSHCCGKAGFPRRLCFFYNKKANVGFLPPFPTLDPEEKCQAYKNNSESFLHLYMYEVARRNPFVFAPVLLAVAAWFEEAATTCCEQQQKATCFQAKAAPITQYLKASSSYQRNVCGALIKFGPKVLNSINVAVFSKKFPKIGFKDLTTLLEDVSSMYEGCCEGDVVHCIRSQSQVVNHICSKQDSISSKIKVCCEKKTLEREACIINANKDDRPEGLSLREAKFTESENVCQERDSDPDKFFAEFIYEYSRRHPDLSTPELLRITKVYMDFLEDCCSRENPAGCYRHVEDKFNETTQRSLAMVQQECKQFQELGKDTLQRHFLVKFTKAAPQLPMEELVSLSKEMVAALTTCCTLSDEFACVDNLADLVLGELCGVNTNRTINPAVDHCCKTDFAFRRHCFEHLKADTTYELPSVSALVSALHTDWCQPRKEDLQNKKHRFLVNLVKWMPGITDEEWLCLFTKFTAAREECSEVQEPESCFSPESSKTGDESQATEKQR.

A signal peptide spans Met-1–Ala-21. 3 Albumin domains span residues Leu-22–Thr-210, Gln-211–Glu-403, and Thr-404–Asp-599. N-linked (GlcNAc...) asparagine glycosylation is present at Asn-33. 11 disulfides stabilise this stretch: Cys-77-Cys-86, Cys-99-Cys-114, Cys-113-Cys-124, Cys-148-Cys-193, Cys-192-Cys-201, Cys-224-Cys-270, Cys-269-Cys-277, Cys-289-Cys-303, Cys-302-Cys-313, Cys-340-Cys-385, and Cys-384-Cys-393. Asn-109 is a glycosylation site (N-linked (GlcNAc...) asparagine). Asn-153 carries an N-linked (GlcNAc...) asparagine glycan. The interval Ala-215–Lys-319 is binding pocket for hydrophobic ligands. A glycan (N-linked (GlcNAc...) asparagine) is linked at Asn-402. 5 disulfide bridges follow: Cys-416/Cys-462, Cys-461/Cys-470, Cys-483/Cys-499, Cys-498/Cys-509, and Cys-580/Cys-589. A glycan (N-linked (GlcNAc...) asparagine) is linked at Asn-488. The disordered stretch occupies residues Val-583–Arg-608. Over residues Lys-596–Arg-608 the composition is skewed to basic and acidic residues.

Belongs to the ALB/AFP/VDB family. Forms a 1:1 complex with Wnt family members; interacts with WNT1, WNT2B, WNT3, WNT5A, WNT7A, WNT7B, WNT8, WNT9A, WNT9B, WNT10A and WNT10B. Interacts with WNT3A. Post-translationally, N-glycosylated; more than 90% of the glycans are sialylated. As to expression, detected in brain, especially on brain capillaries (at protein level). Expressed in isolated brain capillaries.

It is found in the secreted. Functions as a carrier for hydrophobic molecules in body fluids. Essential for the solubility and activity of lipidated Wnt family members, including WNT1, WNT2B, WNT3, WNT3A, WNT5A, WNT7A, WNT7B, WNT8, WNT9A, WNT9B, WNT10A and WNT10B. Binds vitamin E. May transport vitamin E in body fluids under conditions where the lipoprotein system is not sufficient. May be involved in the transport of vitamin E across the blood-brain barrier. The protein is Afamin (Afm) of Mus musculus (Mouse).